We begin with the raw amino-acid sequence, 545 residues long: MLTQLKTYPKLLKHYEEIKEVHMRDWFSKDKERASRYFLQFESLSLDYSKNRLNDTTLKLLFELANDCSLKEKIEAMFKGEKINTTEKRAVLHTALRSLNDTEILLDNMEVLKSIRSVLKRMRAFSDSVRSGKRLGYTNQVITDIVNIGIGGSDLGALMVCTALKRYAHPRLKMHFVSNVDGTQILDVLEKLNPASTLFIVASKTFSTQETLTNALTARKWFVERSGDEKHIAKHFVAVSTNKEAVQQFGIDEHNMFEFWDFVGGRYSLWSAIGLSIMIYLGKKNFNALLKGAYLMDEHFRNAPFESNLPVLMGLIGVWYINFFQSKSHLIAPYDQYLRHFPKFIQQLDMESNGKRISKKGEIIPYDTCPVVWGDMGINAQHAFFQLLHQGTHLIPIDFIASLDKKPNAKGHHEILFSNVLAQAQAFMKGKSYEEALGELLFKGLDKDEAKDLAHHRVFFGNRPSNILLLEKISPSNIGALVALYEHKVFVQGVIWDINSFDQWGVELGKELAVPILQELEGHKSNAYFDSSTKRLIELYKNYNQ.

Catalysis depends on glutamate 351, which acts as the Proton donor. Active-site residues include histidine 382 and lysine 510.

This sequence belongs to the GPI family.

It localises to the cytoplasm. The catalysed reaction is alpha-D-glucose 6-phosphate = beta-D-fructose 6-phosphate. It functions in the pathway carbohydrate biosynthesis; gluconeogenesis. Its pathway is carbohydrate degradation; glycolysis; D-glyceraldehyde 3-phosphate and glycerone phosphate from D-glucose: step 2/4. In terms of biological role, catalyzes the reversible isomerization of glucose-6-phosphate to fructose-6-phosphate. The polypeptide is Glucose-6-phosphate isomerase (Helicobacter pylori (strain Shi470)).